The primary structure comprises 656 residues: 1-deoxy-D-xylulose-5-phosphate synthase 1 (656 aa).

Thiamine diphosphate-binding positions include H73 and 113–115; that span reads SHA. Residue D144 coordinates Mg(2+). Thiamine diphosphate-binding positions include 145 to 146, N174, Y285, and E367; that span reads GA. N174 contributes to the Mg(2+) binding site. Positions 625-656 are disordered; it reads AGDRAGGPAVEQPGDGRMSGDGRIVMPAQGEN.

The protein belongs to the transketolase family. DXPS subfamily. As to quaternary structure, homodimer. Requires Mg(2+) as cofactor. It depends on thiamine diphosphate as a cofactor.

The catalysed reaction is D-glyceraldehyde 3-phosphate + pyruvate + H(+) = 1-deoxy-D-xylulose 5-phosphate + CO2. It functions in the pathway metabolic intermediate biosynthesis; 1-deoxy-D-xylulose 5-phosphate biosynthesis; 1-deoxy-D-xylulose 5-phosphate from D-glyceraldehyde 3-phosphate and pyruvate: step 1/1. Its function is as follows. Catalyzes the acyloin condensation reaction between C atoms 2 and 3 of pyruvate and glyceraldehyde 3-phosphate to yield 1-deoxy-D-xylulose-5-phosphate (DXP). The sequence is that of 1-deoxy-D-xylulose-5-phosphate synthase 1 from Streptomyces coelicolor (strain ATCC BAA-471 / A3(2) / M145).